Reading from the N-terminus, the 266-residue chain is Energy-coupling factor transporter ATP-binding protein EcfA2 (266 aa).

Positions 3–238 (IEVVNVSHIF…YDPRFFTSKM (236 aa)) constitute an ABC transporter domain. 43–48 (GSGKST) serves as a coordination point for ATP. The active-site Proton acceptor is the Glu164. The required for heterodimer formation stretch occupies residues 220-266 (GTRMEFLEKYDPRFFTSKMLVMRRLVLKGEDPFSMSDDELLERVCNS).

Belongs to the ABC transporter superfamily. Energy-coupling factor EcfA family. As to quaternary structure, forms a heterodimer with EcfA1. Forms a stable energy-coupling factor (ECF) transporter complex composed of 2 membrane-embedded substrate-binding proteins (S component, RibU, BioY), 2 ATP-binding proteins (A component) and 2 transmembrane proteins (T component) upon coexpression in E.coli. Stable subcomplexes with both A plus T components can also be isolated. This complex interacts with at least 2 substrate-specific components, BioY and RibU.

It is found in the cell inner membrane. ATP-binding (A) component of a common energy-coupling factor (ECF) ABC-transporter complex. Unlike classic ABC transporters this ECF transporter provides the energy necessary to transport a number of different substrates. Expression of the complex plus RibU in E.coli allows riboflavin uptake; uptake does not occur in the absence of RibU or the EcfA1A2T complex. This chain is Energy-coupling factor transporter ATP-binding protein EcfA2 (ecfA2), found in Thermotoga maritima (strain ATCC 43589 / DSM 3109 / JCM 10099 / NBRC 100826 / MSB8).